The sequence spans 397 residues: 42.8 kDa protein in whiE locus (397 aa).

The interval 1 to 22 is disordered; it reads MTVSPVVATDAPSTDATRTTAT. Positions 8–22 are enriched in low complexity; that stretch reads ATDAPSTDATRTTAT. The ABM domain occupies 46-137; sequence VRVVLMLDVH…DTHSLRYSVL (92 aa).

This sequence belongs to the SchA/CurD family.

This chain is 42.8 kDa protein in whiE locus, found in Streptomyces coelicolor (strain ATCC BAA-471 / A3(2) / M145).